We begin with the raw amino-acid sequence, 377 residues long: MADFLPSRSVLSVCFPGCVLTNGEAEQQRKSKEIDKCLSREKTYVKRLVKILLLGAGESGKSTFLKQMRIIHGQDFDQRAREEFRPTIYSNVIKGMRVLVDAREKLHIPWGDNKNQVHGDKLMAFDTRAPMAAQGMVETRVFLQYLPAIRALWDDSGIQNAYDRRREFQLGESVKYFLDNLDKLGVPDYIPSQQDILLARRPTKGIHEYDFEIKNVPFKMVDVGGQRSERKRWFECFDSVTSILFLVSSSEFDQVLMEDRLTNRLTESLNIFETIVNNRVFSNVSIILFLNKTDLLEEKVQVVSIKDYFLEFEGDPHCLRDVQKFLVECFRGKRRDQQQRPLYHHFTTAINTENIRLVFRDVKDTILHDNLKQLMLQ.

2 S-palmitoyl cysteine lipidation sites follow: C14 and C18. Residues 47–377 (RLVKILLLGA…HDNLKQLMLQ (331 aa)) enclose the G-alpha domain. Residues 50 to 63 (KILLLGAGESGKST) are G1 motif. Residues 58–63 (ESGKST), S173, and 197–200 (LLAR) each bind GTP. S62 is a Mg(2+) binding site. The G2 motif stretch occupies residues 195 to 203 (DILLARRPT). T203 is a Mg(2+) binding site. Phosphothreonine; by PKA is present on T203. Positions 218 to 227 (FKMVDVGGQR) are G3 motif. Residues 287–294 (ILFLNKTD) form a G4 motif region. GTP is bound by residues 291 to 294 (NKTD) and A349. Residues 347-352 (TTAINT) are G5 motif.

It belongs to the G-alpha family. G(12) subfamily. As to quaternary structure, g proteins are composed of 3 units; alpha, beta and gamma. The alpha chain contains the guanine nucleotide binding site. Interacts with UBXD5. Interacts with HAX1. Interacts (in GTP-bound form) with PPP5C (via TPR repeats); activates PPP5C phosphatase activity and translocates PPP5C to the cell membrane. Interacts with RGS22. Interacts with ARHGEF1. Interacts (in GTP-bound form) with ARHGEF11 (via RGS domain). Interacts (in GTP-bound form) with ARHGEF12 (via RGS domain). Interacts (in GTP-bound form) with CTNND1. Interacts with GAS2L2. Interacts with GPR35. Interacts with GPR174. In terms of processing, palmitoylation is critical for proper membrane localization and signaling. Post-translationally, phosphorylation on Thr-203 by PKA destabilizes the heterotrimer of alpha, beta and gamma, and inhibits Rho activation.

Its subcellular location is the membrane. It localises to the melanosome. The protein resides in the cytoplasm. It is found in the nucleus. Guanine nucleotide-binding proteins (G proteins) are involved as modulators or transducers in various transmembrane signaling systems. Activates effector molecule RhoA by binding and activating RhoGEFs (ARHGEF1/p115RhoGEF, ARHGEF11/PDZ-RhoGEF and ARHGEF12/LARG). GNA13-dependent Rho signaling subsequently regulates transcription factor AP-1 (activating protein-1). Promotes tumor cell invasion and metastasis by activating RhoA/ROCK signaling pathway. Inhibits CDH1-mediated cell adhesion in process independent from Rho activation. In lymphoid follicles, transmits P2RY8- and S1PR2-dependent signals that lead to inhibition of germinal center (GC) B cell growth and migration outside the GC niche. The polypeptide is Guanine nucleotide-binding protein subunit alpha-13 (Gna13) (Rattus norvegicus (Rat)).